Here is a 1058-residue protein sequence, read N- to C-terminus: Zinc finger protein 865 (1058 aa).

Disordered stretches follow at residues 1-24, 58-134, and 156-201; these read MEANQAGSGAGGGGSSGIGGEDGV, LPCT…PPLF, and GNLK…ACDP. Over residues 8–21 the composition is skewed to gly residues; the sequence is SGAGGGGSSGIGGE. Positions 61–78 are enriched in pro residues; it reads TPGPPPQPPPQPPPPQYD. Residues 93-113 are compositionally biased toward low complexity; that stretch reads SSSSSSSSSSSSSSSSSSSSS. The span at 120-133 shows a compositional bias: pro residues; it reads PPLPPTFGAPPPPL. Over residues 172–187 the composition is skewed to low complexity; that stretch reads GLGTPTGTPGPLTTPS. 2 C2H2-type zinc fingers span residues 220-242 and 248-270; these read FPCGVCQKSFKQSSHLVQHMLVH and YECGICGRTYNHVSSLIRHRRCH. Residues 269 to 342 form a disordered region; it reads CHKDVPPTPT…PPGVAMPPSA (74 aa). Low complexity predominate over residues 294 to 324; it reads PVSTASATASSDPAAVSSGPSATPATPATST. 9 C2H2-type zinc fingers span residues 350 to 372, 378 to 400, 407 to 429, 439 to 461, 546 to 568, 574 to 596, 602 to 624, 664 to 686, and 692 to 714; these read FACSLCWKVFKKPSHLHQHQIIH, FSCSVCSKSFNRRESLKRHVKTH, LPCGICGKVFRDASYLLKHQAAH, YPCDLCGKTYSAPQSLLRHKAAH, FCCGICGRAFGRRETLKRHERIH, HQCPVCGKRFRESFHLSKHHVVH, YKCELCGKVFGYPQSLTRHRQVH, YACSDCGEHFPDLFHVMSHKEAH, and YGCDACGKTFGFIENLMWHKLVH. The segment at 459–486 is disordered; it reads AAHAPPVATEPAKDGAASVPQPPPPFPP. Residues 721–743 form a disordered region; the sequence is LLAPTPSGPQSSDGGSSGGGTDA. 9 consecutive C2H2-type zinc fingers follow at residues 791-813, 819-841, 847-869, 875-897, 903-925, 931-953, 959-981, 988-1010, and 1016-1038; these read FSCATCGQSFKHFLGLVTHKYVH, LGCGLCGQSFAGAYDLLLHRRSH, FRCPVCGKRFWEAALLMRHQRCH, YRCGVCGRGFLRSWYLRQHRVVH, FKCGVCAKHFAQSSSLAEHRRLH, QRCGACGKTFRYRSNLLEHQRLH, YRCEHCGKGFFYLSSVLRHQRAH, LRCPACLKAFKDPGYFRKHLAAH, and FRCSSCGEGFANTYGLKKHRLMH. A Glycyl lysine isopeptide (Lys-Gly) (interchain with G-Cter in SUMO2) cross-link involves residue Lys801. Residue Lys1039 forms a Glycyl lysine isopeptide (Lys-Gly) (interchain with G-Cter in SUMO2) linkage.

The protein belongs to the krueppel C2H2-type zinc-finger protein family.

It is found in the nucleus. In terms of biological role, may be involved in transcriptional regulation. The sequence is that of Zinc finger protein 865 (Znf865) from Mus musculus (Mouse).